Here is a 46-residue protein sequence, read N- to C-terminus: Light-harvesting protein B800/850/890 alpha-1 chain (46 aa).

The Cytoplasmic portion of the chain corresponds to 1-12 (MWRLWKLYDPRR). The chain crosses the membrane as a helical span at residues 13–33 (VLIGIFSWLAVLALVIHFILL). His-29 provides a ligand contact to a bacteriochlorophyll. Residues 34 to 46 (STDRFNWVGGAAN) lie on the Periplasmic side of the membrane.

It belongs to the antenna complex alpha subunit family. The core complex is formed by different alpha and beta chains, binding bacteriochlorophyll molecules, and arranged most probably in tetrameric structures disposed around the reaction center. The non-pigmented gamma chains may constitute additional components.

It is found in the cell inner membrane. Functionally, antenna complexes are light-harvesting systems, which transfer the excitation energy to the reaction centers. This Halorhodospira halophila (strain DSM 244 / SL1) (Ectothiorhodospira halophila (strain DSM 244 / SL1)) protein is Light-harvesting protein B800/850/890 alpha-1 chain.